A 213-amino-acid chain; its full sequence is Ribosomal RNA large subunit methyltransferase E (213 aa).

S-adenosyl-L-methionine is bound by residues G60, W62, D80, D96, and D121. K161 (proton acceptor) is an active-site residue.

This sequence belongs to the class I-like SAM-binding methyltransferase superfamily. RNA methyltransferase RlmE family.

The protein localises to the cytoplasm. It carries out the reaction uridine(2552) in 23S rRNA + S-adenosyl-L-methionine = 2'-O-methyluridine(2552) in 23S rRNA + S-adenosyl-L-homocysteine + H(+). Its function is as follows. Specifically methylates the uridine in position 2552 of 23S rRNA at the 2'-O position of the ribose in the fully assembled 50S ribosomal subunit. The protein is Ribosomal RNA large subunit methyltransferase E of Xylella fastidiosa (strain 9a5c).